A 717-amino-acid chain; its full sequence is uncharacterized protein (717 aa).

A helical membrane pass occupies residues 19–38 (VFLSTIFVSIIFCLGILFLV).

It to E.coli YtfN.

It is found in the membrane. This is an uncharacterized protein from Buchnera aphidicola subsp. Baizongia pistaciae (strain Bp).